A 280-amino-acid chain; its full sequence is Bifunctional protein FolD (280 aa).

NADP(+) is bound by residues 161 to 163, Ser-186, and Ile-227; that span reads GRS.

The protein belongs to the tetrahydrofolate dehydrogenase/cyclohydrolase family. As to quaternary structure, homodimer.

The catalysed reaction is (6R)-5,10-methylene-5,6,7,8-tetrahydrofolate + NADP(+) = (6R)-5,10-methenyltetrahydrofolate + NADPH. It carries out the reaction (6R)-5,10-methenyltetrahydrofolate + H2O = (6R)-10-formyltetrahydrofolate + H(+). The protein operates within one-carbon metabolism; tetrahydrofolate interconversion. Catalyzes the oxidation of 5,10-methylenetetrahydrofolate to 5,10-methenyltetrahydrofolate and then the hydrolysis of 5,10-methenyltetrahydrofolate to 10-formyltetrahydrofolate. The protein is Bifunctional protein FolD of Caldanaerobacter subterraneus subsp. tengcongensis (strain DSM 15242 / JCM 11007 / NBRC 100824 / MB4) (Thermoanaerobacter tengcongensis).